The sequence spans 459 residues: Argininosuccinate lyase (459 aa).

The protein belongs to the lyase 1 family. Argininosuccinate lyase subfamily.

The protein resides in the cytoplasm. It carries out the reaction 2-(N(omega)-L-arginino)succinate = fumarate + L-arginine. The protein operates within amino-acid biosynthesis; L-arginine biosynthesis; L-arginine from L-ornithine and carbamoyl phosphate: step 3/3. The chain is Argininosuccinate lyase from Lactococcus lactis subsp. cremoris (strain SK11).